A 704-amino-acid chain; its full sequence is Arylphorin (704 aa).

The N-terminal stretch at 1 to 16 is a signal peptide; sequence MKIVLVLAGLIALVQS. Residues N73, N212, and N360 are each glycosylated (N-linked (GlcNAc...) asparagine).

This sequence belongs to the hemocyanin family. As to quaternary structure, homohexamer of two stacked trimers; disulfide-linked. In terms of processing, glycosylation at Asn-360 is required for proper folding.

It localises to the secreted. Its subcellular location is the extracellular space. Arylphorin is a larval storage protein (LSP) which may serve as a storage protein used primarily as a source of aromatic amino acids for protein synthesis during metamorphosis. It is a constituent of the sclerotizing system of the cuticle, and serves as a carrier for ecdysteroid hormone. The sequence is that of Arylphorin from Antheraea pernyi (Chinese oak silk moth).